The sequence spans 629 residues: Phosphomethylpyrimidine synthase (629 aa).

The segment at 1–21 (MSIKAKNAAHLRESAQVDSGS) is disordered. Substrate contacts are provided by residues Asn-233, Met-262, Tyr-291, His-327, 347–349 (SRG), 388–391 (DGLR), and Glu-427. His-431 serves as a coordination point for Zn(2+). Tyr-454 is a binding site for substrate. A Zn(2+)-binding site is contributed by His-495. [4Fe-4S] cluster contacts are provided by Cys-575, Cys-578, and Cys-583.

Belongs to the ThiC family. Homodimer. It depends on [4Fe-4S] cluster as a cofactor.

The enzyme catalyses 5-amino-1-(5-phospho-beta-D-ribosyl)imidazole + S-adenosyl-L-methionine = 4-amino-2-methyl-5-(phosphooxymethyl)pyrimidine + CO + 5'-deoxyadenosine + formate + L-methionine + 3 H(+). Its pathway is cofactor biosynthesis; thiamine diphosphate biosynthesis. Functionally, catalyzes the synthesis of the hydroxymethylpyrimidine phosphate (HMP-P) moiety of thiamine from aminoimidazole ribotide (AIR) in a radical S-adenosyl-L-methionine (SAM)-dependent reaction. The polypeptide is Phosphomethylpyrimidine synthase (Pseudomonas syringae pv. syringae (strain B728a)).